The sequence spans 171 residues: Ribosome maturation factor RimM (171 aa).

A PRC barrel domain is found at 96-168 (EDGFYDHELE…TATITPPEGL (73 aa)).

The protein belongs to the RimM family. As to quaternary structure, binds ribosomal protein uS19.

It is found in the cytoplasm. Its function is as follows. An accessory protein needed during the final step in the assembly of 30S ribosomal subunit, possibly for assembly of the head region. Essential for efficient processing of 16S rRNA. May be needed both before and after RbfA during the maturation of 16S rRNA. It has affinity for free ribosomal 30S subunits but not for 70S ribosomes. The chain is Ribosome maturation factor RimM from Corynebacterium glutamicum (strain ATCC 13032 / DSM 20300 / JCM 1318 / BCRC 11384 / CCUG 27702 / LMG 3730 / NBRC 12168 / NCIMB 10025 / NRRL B-2784 / 534).